Reading from the N-terminus, the 337-residue chain is tRNA N6-adenosine threonylcarbamoyltransferase (337 aa).

Positions 114 and 118 each coordinate Fe cation. Substrate contacts are provided by residues 136–140 (LVSGG), D169, G182, D186, and N275. Fe cation is bound at residue D301.

Belongs to the KAE1 / TsaD family. Requires Fe(2+) as cofactor.

It is found in the cytoplasm. The enzyme catalyses L-threonylcarbamoyladenylate + adenosine(37) in tRNA = N(6)-L-threonylcarbamoyladenosine(37) in tRNA + AMP + H(+). In terms of biological role, required for the formation of a threonylcarbamoyl group on adenosine at position 37 (t(6)A37) in tRNAs that read codons beginning with adenine. Is involved in the transfer of the threonylcarbamoyl moiety of threonylcarbamoyl-AMP (TC-AMP) to the N6 group of A37, together with TsaE and TsaB. TsaD likely plays a direct catalytic role in this reaction. The protein is tRNA N6-adenosine threonylcarbamoyltransferase of Streptococcus thermophilus (strain CNRZ 1066).